The primary structure comprises 580 residues: MVMLLRARCFQRLAIPDPMRVLYKDYRTATPQNFSNYESMKQDFKIEIPEYFNFAKDVLDQWTNMEKAGKRLSNPAFWWIDGNGEELRWSFEELGLLSRKFANILTEACSLQRGDRVMVILPKIPEWWLANVACLRTGTVLIPGTTQLTQKDILYRLQSSKAKCIITDDTLAPAVDAVAAKCENLHSKLIVSQHSREGWGNLKEMMKYASDSHTCVDTKHDEMMAIYFTSGTTGPPKMIGHTHSSFGLGLSVNGRFWLDLIASDVMWNTSDTGWAKSAWSSVFSPWTQGACVFAHYLPRFESTSILQTLSKFPITVFCSAPTAYRMLVQNDMSSYKFNSLKHCVSAGEPINPEVMEQWRKKTGLDIYEGYGQTETVLICGNFKGMKIKPGSMGKPSPAFDVKILDENGATLPPGQEGDIALQVLPERPFGLFTHYVDNPSKTASTLRGSFYITGDRGYMDEDGYFWFVARSDDIILSSGYRIGPFEVESALIEHPSIAESAVVSSPDPIRGEVVKAFIVLNPDYKSHDQEQLKKEIQEHVKKTTAPYKYPRKVEFIEELPKTVSGKVKRNELRKKEWVTT.

The N-terminal 21 residues, 1–21, are a transit peptide targeting the mitochondrion; sequence MVMLLRARCFQRLAIPDPMRV. N6-succinyllysine is present on residues Lys67 and Lys100. N6-acetyllysine is present on Lys151. Residues 229–237, 368–373, Asp455, Arg470, and Lys566 contribute to the ATP site; these read TSGTTGPPK and EGYGQT.

The protein belongs to the ATP-dependent AMP-binding enzyme family. The cofactor is Mg(2+). Requires Mn(2+) as cofactor. As to expression, detected in kidney (at protein level). Detected in kidney proximal tubules and in liver. Detected at low levels in testis, stomach, heart and lung.

The protein resides in the mitochondrion. It is found in the mitochondrion matrix. It carries out the reaction a medium-chain fatty acid + ATP + CoA = a medium-chain fatty acyl-CoA + AMP + diphosphate. The catalysed reaction is propanoate + ATP + CoA = propanoyl-CoA + AMP + diphosphate. The enzyme catalyses butanoate + ATP + CoA = butanoyl-CoA + AMP + diphosphate. It catalyses the reaction 2-methylpropanoate + ATP + CoA = 2-methylpropanoyl-CoA + AMP + diphosphate. It carries out the reaction 2-methylbutanoate + ATP + CoA = 2-methylbutanoyl-CoA + AMP + diphosphate. The catalysed reaction is octanoate + ATP + CoA = octanoyl-CoA + AMP + diphosphate. Its function is as follows. Catalyzes the activation of fatty acids by CoA to produce an acyl-CoA, the first step in fatty acid metabolism. Capable of activating medium-chain fatty acids with a preference for isobutyrate among fatty acids with 2-6 carbon atoms. This chain is Acyl-coenzyme A synthetase ACSM3, mitochondrial (Acsm3), found in Mus musculus (Mouse).